Here is a 172-residue protein sequence, read N- to C-terminus: Large ribosomal subunit protein uL10 (172 aa).

This sequence belongs to the universal ribosomal protein uL10 family. Part of the ribosomal stalk of the 50S ribosomal subunit. The N-terminus interacts with L11 and the large rRNA to form the base of the stalk. The C-terminus forms an elongated spine to which L12 dimers bind in a sequential fashion forming a multimeric L10(L12)X complex.

In terms of biological role, forms part of the ribosomal stalk, playing a central role in the interaction of the ribosome with GTP-bound translation factors. In Ruegeria sp. (strain TM1040) (Silicibacter sp.), this protein is Large ribosomal subunit protein uL10.